A 111-amino-acid chain; its full sequence is Small ribosomal subunit protein bS16 (111 aa).

Belongs to the bacterial ribosomal protein bS16 family.

The protein is Small ribosomal subunit protein bS16 of Rickettsia felis (strain ATCC VR-1525 / URRWXCal2) (Rickettsia azadi).